A 255-amino-acid polypeptide reads, in one-letter code: Ribosomal RNA small subunit methyltransferase J (255 aa).

S-adenosyl-L-methionine is bound by residues 107–108 (RD), 123–124 (ER), and D178. The disordered stretch occupies residues 228–247 (ARAEPLSGRKPSHQIPGKTT).

It belongs to the methyltransferase superfamily. RsmJ family.

Its subcellular location is the cytoplasm. It carries out the reaction guanosine(1516) in 16S rRNA + S-adenosyl-L-methionine = N(2)-methylguanosine(1516) in 16S rRNA + S-adenosyl-L-homocysteine + H(+). Functionally, specifically methylates the guanosine in position 1516 of 16S rRNA. The sequence is that of Ribosomal RNA small subunit methyltransferase J from Thioalkalivibrio sulfidiphilus (strain HL-EbGR7).